We begin with the raw amino-acid sequence, 442 residues long: D-serine dehydratase (442 aa).

Residue Lys-118 is modified to N6-(pyridoxal phosphate)lysine.

The protein belongs to the serine/threonine dehydratase family. DsdA subfamily. Monomer. The cofactor is pyridoxal 5'-phosphate.

It catalyses the reaction D-serine = pyruvate + NH4(+). The sequence is that of D-serine dehydratase from Shigella flexneri serotype 5b (strain 8401).